A 206-amino-acid chain; its full sequence is Venom allergen 5 (206 aa).

4 cysteine pairs are disulfide-bonded: Cys5/Cys18, Cys9/Cys103, Cys28/Cys96, and Cys172/Cys189. The SCP domain maps to 47 to 191 (LKVHNDFRQK…WYTHYLVCNY (145 aa)).

Belongs to the CRISP family. Venom allergen 5-like subfamily. Expressed by the venom gland.

The protein localises to the secreted. The polypeptide is Venom allergen 5 (Vespula vidua (Ground hornet)).